Here is a 451-residue protein sequence, read N- to C-terminus: Tubulin beta-1 chain (451 aa).

Residues 1–4 (MREI) carry the MREI motif motif. Positions 11, 69, 138, 142, 143, and 144 each coordinate GTP. Residue Glu69 coordinates Mg(2+). Ser172 is modified (phosphoserine; by CDK1). Residues Asn204 and Asn226 each contribute to the GTP site. The interval 430 to 451 (AGLEDSEEDVEEAEVEAEDKDH) is disordered. Over residues 433–451 (EDSEEDVEEAEVEAEDKDH) the composition is skewed to acidic residues. Ser435 is modified (phosphoserine). At Glu440 the chain carries 5-glutamyl polyglutamate.

It belongs to the tubulin family. As to quaternary structure, dimer of alpha and beta chains. A typical microtubule is a hollow water-filled tube with an outer diameter of 25 nm and an inner diameter of 15 nM. Alpha-beta heterodimers associate head-to-tail to form protofilaments running lengthwise along the microtubule wall with the beta-tubulin subunit facing the microtubule plus end conferring a structural polarity. Microtubules usually have 13 protofilaments but different protofilament numbers can be found in some organisms and specialized cells. Interacts with RANBP10. Requires Mg(2+) as cofactor. Post-translationally, some glutamate residues at the C-terminus are polyglycylated, resulting in polyglycine chains on the gamma-carboxyl group. Glycylation is mainly limited to tubulin incorporated into axonemes (cilia and flagella) whereas glutamylation is prevalent in neuronal cells, centrioles, axonemes, and the mitotic spindle. Both modifications can coexist on the same protein on adjacent residues, and lowering polyglycylation levels increases polyglutamylation, and reciprocally. Cilia and flagella glycylation is required for their stability and maintenance. Flagella glycylation controls sperm motility. Some glutamate residues at the C-terminus are polyglutamylated, resulting in polyglutamate chains on the gamma-carboxyl group. Polyglutamylation plays a key role in microtubule severing by spastin (SPAST). SPAST preferentially recognizes and acts on microtubules decorated with short polyglutamate tails: severing activity by SPAST increases as the number of glutamates per tubulin rises from one to eight, but decreases beyond this glutamylation threshold. Glutamylation is also involved in cilia motility. In terms of processing, phosphorylated on Ser-172 by CDK1 during the cell cycle, from metaphase to telophase, but not in interphase. This phosphorylation inhibits tubulin incorporation into microtubules.

The protein localises to the cytoplasm. Its subcellular location is the cytoskeleton. Tubulin is the major constituent of microtubules, a cylinder consisting of laterally associated linear protofilaments composed of alpha- and beta-tubulin heterodimers. Microtubules grow by the addition of GTP-tubulin dimers to the microtubule end, where a stabilizing cap forms. Below the cap, tubulin dimers are in GDP-bound state, owing to GTPase activity of alpha-tubulin. The polypeptide is Tubulin beta-1 chain (Tubb1) (Mus musculus (Mouse)).